Here is a 94-residue protein sequence, read N- to C-terminus: Protein S100-A1 (94 aa).

EF-hand domains are found at residues 13 to 48 (INVF…FLDV) and 50 to 85 (KDAD…LTVA). Residues Lys28, Glu33, Asp63, Asn65, Asp67, Glu69, and Glu74 each contribute to the Ca(2+) site. S-nitrosocysteine is present on Cys86.

Belongs to the S-100 family. In terms of assembly, dimer of either two alpha chains, or two beta chains, or one alpha and one beta chain. Also forms heterodimers with S100P. Interacts with AGER. Interacts with CAPZA1. Interacts with FKBP4. Interacts with RYR1 and RYR2. Interacts with CACYBP in a calcium-dependent manner. Interacts with PPP5C (via TPR repeats); the interaction is calcium-dependent and modulates PPP5C activity. Interacts with ATP2A2 and PLN in a Ca(2+)-dependent manner. Interacts with mitochondrial F1-ATPase subunits ATP5F1A and ATP5F1B; these interactions increase F1-ATPase activity. Glutathionylated; glutathionylation increases affinity to calcium about 10-fold. In terms of tissue distribution, expressed in the cardiac and the skeletal muscles.

It localises to the cytoplasm. It is found in the sarcoplasmic reticulum. The protein localises to the mitochondrion. Functionally, small calcium binding protein that plays important roles in several biological processes such as Ca(2+) homeostasis, chondrocyte biology and cardiomyocyte regulation. In response to an increase in intracellular Ca(2+) levels, binds calcium which triggers conformational changes. These changes allow interactions with specific target proteins and modulate their activity. Regulates a network in cardiomyocytes controlling sarcoplasmic reticulum Ca(2+) cycling and mitochondrial function through interaction with the ryanodine receptors RYR1 and RYR2, sarcoplasmic reticulum Ca(2+)-ATPase/ATP2A2 and mitochondrial F1-ATPase. Facilitates diastolic Ca(2+) dissociation and myofilament mechanics in order to improve relaxation during diastole. In Mus musculus (Mouse), this protein is Protein S100-A1 (S100a1).